The chain runs to 147 residues: Hemoglobin subunit epsilon (147 aa).

The 145-residue stretch at 3 to 147 (HFTAEEKAAV…VAIALAHKYH (145 aa)) folds into the Globin domain. 2 positions are modified to phosphoserine: Ser14 and Ser51. Residues His64 and His93 each contribute to the heme b site.

This sequence belongs to the globin family. As to quaternary structure, heterotetramer of two alpha chains and two epsilon chains in early embryonic hemoglobin Gower-2; two zeta chains and two epsilon chains in early embryonic hemoglobin Gower-1. As to expression, red blood cells.

Its function is as follows. The epsilon chain is a beta-type chain of early mammalian embryonic hemoglobin. The protein is Hemoglobin subunit epsilon (HBE1) of Pan paniscus (Pygmy chimpanzee).